The following is a 77-amino-acid chain: Translation initiation factor IF-1, chloroplastic (77 aa).

The 71-residue stretch at Met-1–Arg-71 folds into the S1-like domain.

The protein belongs to the IF-1 family. As to quaternary structure, component of the 30S ribosomal translation pre-initiation complex which assembles on the 30S ribosome in the order IF-2 and IF-3, IF-1 and N-formylmethionyl-tRNA(fMet); mRNA recruitment can occur at any time during PIC assembly.

It localises to the plastid. It is found in the chloroplast. Its function is as follows. One of the essential components for the initiation of protein synthesis. Stabilizes the binding of IF-2 and IF-3 on the 30S subunit to which N-formylmethionyl-tRNA(fMet) subsequently binds. Helps modulate mRNA selection, yielding the 30S pre-initiation complex (PIC). Upon addition of the 50S ribosomal subunit IF-1, IF-2 and IF-3 are released leaving the mature 70S translation initiation complex. This Spinacia oleracea (Spinach) protein is Translation initiation factor IF-1, chloroplastic.